The chain runs to 218 residues: Probable septum site-determining protein MinC (218 aa).

The protein belongs to the MinC family. As to quaternary structure, interacts with MinD and FtsZ.

Cell division inhibitor that blocks the formation of polar Z ring septums. Rapidly oscillates between the poles of the cell to destabilize FtsZ filaments that have formed before they mature into polar Z rings. Prevents FtsZ polymerization. The sequence is that of Probable septum site-determining protein MinC from Moorella thermoacetica (strain ATCC 39073 / JCM 9320).